A 753-amino-acid chain; its full sequence is 5-methyltetrahydropteroyltriglutamate--homocysteine methyltransferase (753 aa).

Residues Arg17–Lys20 and Lys117 each bind 5-methyltetrahydropteroyltri-L-glutamate. L-homocysteine contacts are provided by residues Ile431–Ser433 and Glu484. L-methionine contacts are provided by residues Ile431–Ser433 and Glu484. 5-methyltetrahydropteroyltri-L-glutamate is bound by residues Arg515 to Cys516 and Trp561. Position 599 (Asp599) interacts with L-homocysteine. Residue Asp599 coordinates L-methionine. Residue Glu605 coordinates 5-methyltetrahydropteroyltri-L-glutamate. Residues His641, Cys643, and Glu665 each coordinate Zn(2+). His694 (proton donor) is an active-site residue. Zn(2+) is bound at residue Cys726.

It belongs to the vitamin-B12 independent methionine synthase family. Zn(2+) is required as a cofactor.

It catalyses the reaction 5-methyltetrahydropteroyltri-L-glutamate + L-homocysteine = tetrahydropteroyltri-L-glutamate + L-methionine. It participates in amino-acid biosynthesis; L-methionine biosynthesis via de novo pathway; L-methionine from L-homocysteine (MetE route): step 1/1. In terms of biological role, catalyzes the transfer of a methyl group from 5-methyltetrahydrofolate to homocysteine resulting in methionine formation. This Escherichia coli O1:K1 / APEC protein is 5-methyltetrahydropteroyltriglutamate--homocysteine methyltransferase.